A 154-amino-acid chain; its full sequence is uncharacterized protein (154 aa).

This is an uncharacterized protein from Aquifex aeolicus (strain VF5).